We begin with the raw amino-acid sequence, 464 residues long: Glucose N-acetyltransferase 1 (464 aa).

The Cytoplasmic portion of the chain corresponds to Met-1 to Trp-14. Residues Glu-15–Phe-35 traverse the membrane as a helical; Signal-anchor for type II membrane protein segment. Over Glu-36 to Val-464 the chain is Lumenal. The short motif at Asp-167 to Asp-169 is the DXD element. N-linked (GlcNAc...) asparagine glycans are attached at residues Asn-180, Asn-186, Asn-248, and Asn-310.

It belongs to the GNT1 family.

Its subcellular location is the golgi apparatus membrane. It is found in the vacuole membrane. In terms of biological role, N-acetylglucosaminyltransferase involved in the Golgi-specific modification of N-linked glycans. This Debaryomyces hansenii (strain ATCC 36239 / CBS 767 / BCRC 21394 / JCM 1990 / NBRC 0083 / IGC 2968) (Yeast) protein is Glucose N-acetyltransferase 1 (GNT1).